A 218-amino-acid polypeptide reads, in one-letter code: MTKFSQNIDYLRNKVFVPGVVLSTLYSPGLSAKTCIIKYLDGEVRKILCPTGLKPGNSVLTGIEIPIALGNHLLLKNLPLGTDIHNVELYPGCGGKLARAGGTFANVIAKEGSYVTLRLPSGEVRFISKYCWATIGRICEKNNGKKALYKAGQNRWIGKRPHVRGVVKNPVDHPHGGGEGRSPIGRSHPVTPWGRIALGQRTRKSKRYSDLLILSRRK.

The tract at residues 165-192 (GVVKNPVDHPHGGGEGRSPIGRSHPVTP) is disordered.

It belongs to the universal ribosomal protein uL2 family. In terms of assembly, part of the 50S ribosomal subunit.

It localises to the plastid. The protein resides in the chloroplast. The polypeptide is Large ribosomal subunit protein uL2c (rpl2) (Bigelowiella natans (Pedinomonas minutissima)).